We begin with the raw amino-acid sequence, 303 residues long: Tyrosine-protein phosphatase 3 (303 aa).

One can recognise a Tyrosine-protein phosphatase domain in the interval 24–292; sequence YMIIEGLNEE…VFLYTVSQEL (269 aa). Catalysis depends on cysteine 227, which acts as the Phosphocysteine intermediate.

This sequence belongs to the protein-tyrosine phosphatase family. Non-receptor class subfamily.

The protein resides in the cytoplasm. The enzyme catalyses O-phospho-L-tyrosyl-[protein] + H2O = L-tyrosyl-[protein] + phosphate. Functionally, contributes to dephosphorylation of tyrosine 15 of cdc2. This is Tyrosine-protein phosphatase 3 (pyp3) from Schizosaccharomyces pombe (strain 972 / ATCC 24843) (Fission yeast).